The following is a 295-amino-acid chain: Translational activator of cytochrome c oxidase 1 (295 aa).

Lys162 carries the post-translational modification N6-acetyllysine. Residues 190-225 (VEDREKKAVNLERALELAIEAGAEDVREAEDEEEEK) are a coiled coil.

Belongs to the TACO1 family.

The protein resides in the mitochondrion. Functionally, acts as a translational activator of mitochondrially-encoded cytochrome c oxidase 1. This Rattus norvegicus (Rat) protein is Translational activator of cytochrome c oxidase 1.